Consider the following 421-residue polypeptide: CinA-like protein (421 aa).

It belongs to the CinA family.

The polypeptide is CinA-like protein (Synechococcus elongatus (strain ATCC 33912 / PCC 7942 / FACHB-805) (Anacystis nidulans R2)).